A 532-amino-acid polypeptide reads, in one-letter code: Autoinducer-2 kinase (532 aa).

Belongs to the FGGY kinase family.

The protein resides in the cytoplasm. It carries out the reaction (S)-4,5-dihydroxypentane-2,3-dione + ATP = (2S)-2-hydroxy-3,4-dioxopentyl phosphate + ADP + H(+). Catalyzes the phosphorylation of autoinducer-2 (AI-2) to phospho-AI-2, which subsequently inactivates the transcriptional regulator LsrR and leads to the transcription of the lsr operon. Phosphorylates the ring-open form of (S)-4,5-dihydroxypentane-2,3-dione (DPD), which is the precursor to all AI-2 signaling molecules, at the C5 position. This chain is Autoinducer-2 kinase, found in Klebsiella pneumoniae subsp. pneumoniae (strain ATCC 700721 / MGH 78578).